The sequence spans 182 residues: Large ribosomal subunit protein uL6 (182 aa).

Belongs to the universal ribosomal protein uL6 family. In terms of assembly, part of the 50S ribosomal subunit.

In terms of biological role, this protein binds to the 23S rRNA, and is important in its secondary structure. It is located near the subunit interface in the base of the L7/L12 stalk, and near the tRNA binding site of the peptidyltransferase center. This Karelsulcia muelleri (strain GWSS) (Sulcia muelleri) protein is Large ribosomal subunit protein uL6.